Reading from the N-terminus, the 247-residue chain is 7-carboxy-7-deazaguanine synthase (247 aa).

Substrate-binding positions include 15-17 and Arg-30; that span reads IQG. The Radical SAM core domain occupies 21–247; the sequence is LVGRRQIFVR…PQMHRALGLR (227 aa). [4Fe-4S] cluster-binding residues include Cys-34, Cys-38, and Cys-41. Thr-43 lines the Mg(2+) pocket. Thr-78 is a substrate binding site. Gly-80 lines the S-adenosyl-L-methionine pocket.

The protein belongs to the radical SAM superfamily. 7-carboxy-7-deazaguanine synthase family. In terms of assembly, homodimer. The cofactor is [4Fe-4S] cluster. Requires S-adenosyl-L-methionine as cofactor. Mg(2+) serves as cofactor.

The catalysed reaction is 6-carboxy-5,6,7,8-tetrahydropterin + H(+) = 7-carboxy-7-deazaguanine + NH4(+). Its pathway is purine metabolism; 7-cyano-7-deazaguanine biosynthesis. Catalyzes the complex heterocyclic radical-mediated conversion of 6-carboxy-5,6,7,8-tetrahydropterin (CPH4) to 7-carboxy-7-deazaguanine (CDG), a step common to the biosynthetic pathways of all 7-deazapurine-containing compounds. This Methanothermobacter thermautotrophicus (strain ATCC 29096 / DSM 1053 / JCM 10044 / NBRC 100330 / Delta H) (Methanobacterium thermoautotrophicum) protein is 7-carboxy-7-deazaguanine synthase.